The primary structure comprises 281 residues: Putative phosphatase MPN_264 (281 aa).

Residue Asp8 is the Nucleophile of the active site. Position 8 (Asp8) interacts with Mg(2+). A phosphate-binding site is contributed by Leu9. Asp10 contributes to the Mg(2+) binding site. Phosphate-binding positions include 44-45 and Lys205; that span reads TG. Mg(2+)-binding residues include Asp228 and Ser229. Residue Asn231 participates in phosphate binding.

Belongs to the HAD-like hydrolase superfamily. Cof family. Mg(2+) is required as a cofactor.

The polypeptide is Putative phosphatase MPN_264 (Mycoplasma pneumoniae (strain ATCC 29342 / M129 / Subtype 1) (Mycoplasmoides pneumoniae)).